Reading from the N-terminus, the 431-residue chain is TDP-daunosamine transferase DnrS (431 aa).

Residues 1–23 form the signal peptide; that stretch reads MKVLVTAFAMDAHFNGVVPLAWA.

This sequence belongs to the glycosyltransferase 28 family.

It catalyses the reaction dTDP-beta-L-daunosamine + epsilon-rhodomycinone = rhodomycin D + dTDP + H(+). Its pathway is antibiotic biosynthesis; daunorubicin biosynthesis. It functions in the pathway antibiotic biosynthesis; carminomycin biosynthesis. Its function is as follows. Involved in the biosynthesis of the anthracyclines carminomycin and daunorubicin (daunomycin) which are aromatic polyketide antibiotics that exhibit high cytotoxicity and are widely applied in the chemotherapy of a variety of cancers. Catalyzes the addition of the TDP activated glycoside, L-daunosamine-TDP (2,3,6-trideoxy-3-aminohexose-TDP) at position C-7 of epsilon-rhodomycinone to yield rhodomycin D. Glycosylation is a prerequisite for biological activity of anthracyclines and requires DnrQ which seems to act as an activator. The chain is TDP-daunosamine transferase DnrS (dnrS) from Streptomyces peucetius.